A 550-amino-acid chain; its full sequence is Hydroxylamine reductase (550 aa).

Residues C3, C6, C18, and C25 each contribute to the [2Fe-2S] cluster site. Hybrid [4Fe-2O-2S] cluster is bound by residues H249, E273, C317, C405, C433, C458, E492, and K494. C405 is subject to Cysteine persulfide.

This sequence belongs to the HCP family. [2Fe-2S] cluster is required as a cofactor. Hybrid [4Fe-2O-2S] cluster serves as cofactor.

Its subcellular location is the cytoplasm. It carries out the reaction A + NH4(+) + H2O = hydroxylamine + AH2 + H(+). Its activity is regulated as follows. Inhibited by oxygen. Activated by cyanide except in the prolonged presence of excess cyanide, where the enzyme is inactivated. In terms of biological role, catalyzes the reduction of hydroxylamine to form NH(3) and H(2)O. Is also able to reduce hydroxylamine analogs such as methylhydroxylamine and hydroxyquinone. Might have a role as a scavenger of potentially toxic by-products of nitrate metabolism. This chain is Hydroxylamine reductase, found in Escherichia coli (strain K12).